Here is a 715-residue protein sequence, read N- to C-terminus: Interferon-induced GTP-binding protein Mx2 (715 aa).

The span at 1–14 (MSKAHKSWPHRRRN) shows a compositional bias: basic residues. Disordered stretches follow at residues 1–24 (MSKA…SLKK) and 69–88 (NNQP…PENN). A compositionally biased stretch (polar residues) spans 69 to 80 (NNQPLPGNTSQP). Residues 115–387 (DLALPAIAVI…LITHIQKSLP (273 aa)) enclose the Dynamin-type G domain. Residues 125–132 (GDQSSGKS) form a G1 motif region. 125–132 (GDQSSGKS) contributes to the GTP binding site. A G2 motif region spans residues 150–152 (VTR). A G3 motif region spans residues 225-228 (DLPG). GTP-binding positions include 225-229 (DLPGI) and 294-297 (TKPD). The tract at residues 294-297 (TKPD) is G4 motif. The G5 motif stretch occupies residues 326–329 (KCRG). Residues 623-714 (FNEIGVHLNA…ALCQFSSKEI (92 aa)) enclose the GED domain.

This sequence belongs to the TRAFAC class dynamin-like GTPase superfamily. Dynamin/Fzo/YdjA family.

Its subcellular location is the cytoplasm. It is found in the nucleus. Functionally, interferon-induced dynamin-like GTPase with antiviral activity. This Macaca mulatta (Rhesus macaque) protein is Interferon-induced GTP-binding protein Mx2 (MX2).